We begin with the raw amino-acid sequence, 151 residues long: Prefoldin subunit 5 (151 aa).

Residues 15–35 adopt a coiled-coil conformation; sequence IDQLKALKEQADLEVNLLQDS.

The protein belongs to the prefoldin subunit alpha family. Heterohexamer of two PFD-alpha type and four PFD-beta type subunits forming prefoldin co-chaperone complex. Interacts with PFD6. Binds to the DELLA protein GAI.

Its subcellular location is the cytoplasm. It localises to the nucleus. In terms of biological role, binds specifically to cytosolic chaperonin (c-CPN) and transfers target proteins to it. Binds to nascent polypeptide chain and promotes folding in an environment in which there are many competing pathways for nonnative proteins. Together with other chaperonins, contribute to the regulation of gene expression by modulating the spliceosome function on pre-mRNA splicing post-transcriptionally by acting as a co-chaperone of Hsp90 to control levels of LSM8. Required for the biogenesis of tubulins and for subsequent microtubules (MTs) organization and dynamicity. Necessary for tolerance to NaCl salt stress. Involved in the process leading to microtubules dissociation in response to gibberellic acid (GA) probably due to the DELLA proteins-mediated translocation of the prefoldin co-chaperone complex from the cytoplasm to the nucleus. Prevents cold acclimation (e.g. 7 days at 4 degrees Celsius) in a DELLA proteins-dependent manner by promoting nuclear proteasome-mediated HY5 degradation, thus modulating the expression of several genes and reducing anthocyanin biosynthesis, but seems not involved in constitutive freezing tolerance. Contributes to the GA-dependent regulation of PIN2 trafficking at the plasma membrane, thus influencing auxin flux. The protein is Prefoldin subunit 5 of Arabidopsis thaliana (Mouse-ear cress).